The chain runs to 205 residues: Protein N-terminal glutamine amidohydrolase (205 aa).

Active-site residues include cysteine 20, histidine 74, and aspartate 90.

It belongs to the NTAQ1 family. In terms of assembly, monomer.

The catalysed reaction is N-terminal L-glutaminyl-[protein] + H2O = N-terminal L-glutamyl-[protein] + NH4(+). Its function is as follows. Mediates the side-chain deamidation of N-terminal glutamine residues to glutamate, an important step in N-end rule pathway of protein degradation. Conversion of the resulting N-terminal glutamine to glutamate renders the protein susceptible to arginylation, polyubiquitination and degradation as specified by the N-end rule. Does not act on substrates with internal or C-terminal glutamine and does not act on non-glutamine residues in any position. The polypeptide is Protein N-terminal glutamine amidohydrolase (tun) (Drosophila virilis (Fruit fly)).